We begin with the raw amino-acid sequence, 397 residues long: Succinate--CoA ligase [ADP-forming] subunit beta (397 aa).

In terms of domain architecture, ATP-grasp spans 9–254 (KALLRSYGAP…ETEEDPKELA (246 aa)). ATP contacts are provided by residues Lys-46, 53-55 (GRG), Glu-109, Ser-112, and Glu-117. Asn-209 and Asp-223 together coordinate Mg(2+). Residues Asn-274 and 331–333 (GIM) contribute to the substrate site.

It belongs to the succinate/malate CoA ligase beta subunit family. Heterotetramer of two alpha and two beta subunits. Requires Mg(2+) as cofactor.

It carries out the reaction succinate + ATP + CoA = succinyl-CoA + ADP + phosphate. The enzyme catalyses GTP + succinate + CoA = succinyl-CoA + GDP + phosphate. The protein operates within carbohydrate metabolism; tricarboxylic acid cycle; succinate from succinyl-CoA (ligase route): step 1/1. In terms of biological role, succinyl-CoA synthetase functions in the citric acid cycle (TCA), coupling the hydrolysis of succinyl-CoA to the synthesis of either ATP or GTP and thus represents the only step of substrate-level phosphorylation in the TCA. The beta subunit provides nucleotide specificity of the enzyme and binds the substrate succinate, while the binding sites for coenzyme A and phosphate are found in the alpha subunit. The chain is Succinate--CoA ligase [ADP-forming] subunit beta from Cereibacter sphaeroides (strain ATCC 17029 / ATH 2.4.9) (Rhodobacter sphaeroides).